Consider the following 337-residue polypeptide: Lipoyl synthase (337 aa).

[4Fe-4S] cluster is bound by residues Cys-81, Cys-86, Cys-92, Cys-107, Cys-111, Cys-114, and Ser-323. A Radical SAM core domain is found at 93-312 (FSHGTATFMI…EDYGNALGFS (220 aa)).

This sequence belongs to the radical SAM superfamily. Lipoyl synthase family. It depends on [4Fe-4S] cluster as a cofactor.

It is found in the cytoplasm. It carries out the reaction [[Fe-S] cluster scaffold protein carrying a second [4Fe-4S](2+) cluster] + N(6)-octanoyl-L-lysyl-[protein] + 2 oxidized [2Fe-2S]-[ferredoxin] + 2 S-adenosyl-L-methionine + 4 H(+) = [[Fe-S] cluster scaffold protein] + N(6)-[(R)-dihydrolipoyl]-L-lysyl-[protein] + 4 Fe(3+) + 2 hydrogen sulfide + 2 5'-deoxyadenosine + 2 L-methionine + 2 reduced [2Fe-2S]-[ferredoxin]. The protein operates within protein modification; protein lipoylation via endogenous pathway; protein N(6)-(lipoyl)lysine from octanoyl-[acyl-carrier-protein]: step 2/2. Its function is as follows. Catalyzes the radical-mediated insertion of two sulfur atoms into the C-6 and C-8 positions of the octanoyl moiety bound to the lipoyl domains of lipoate-dependent enzymes, thereby converting the octanoylated domains into lipoylated derivatives. In Xanthomonas euvesicatoria pv. vesicatoria (strain 85-10) (Xanthomonas campestris pv. vesicatoria), this protein is Lipoyl synthase.